The chain runs to 493 residues: Glycerol kinase (493 aa).

Threonine 13 contacts ADP. ATP-binding residues include threonine 13, threonine 14, and serine 15. Residue threonine 13 coordinates sn-glycerol 3-phosphate. Residue arginine 17 coordinates ADP. Arginine 83, glutamate 84, tyrosine 135, and aspartate 244 together coordinate sn-glycerol 3-phosphate. The glycerol site is built by arginine 83, glutamate 84, tyrosine 135, aspartate 244, and glutamine 245. ADP is bound by residues threonine 266 and glycine 309. Positions 266, 309, 313, and 410 each coordinate ATP. ADP contacts are provided by glycine 410 and asparagine 414.

The protein belongs to the FGGY kinase family.

It carries out the reaction glycerol + ATP = sn-glycerol 3-phosphate + ADP + H(+). It functions in the pathway polyol metabolism; glycerol degradation via glycerol kinase pathway; sn-glycerol 3-phosphate from glycerol: step 1/1. With respect to regulation, inhibited by fructose 1,6-bisphosphate (FBP). Key enzyme in the regulation of glycerol uptake and metabolism. Catalyzes the phosphorylation of glycerol to yield sn-glycerol 3-phosphate. This Shewanella pealeana (strain ATCC 700345 / ANG-SQ1) protein is Glycerol kinase.